The primary structure comprises 67 residues: Large ribosomal subunit protein uL29 (67 aa).

The protein belongs to the universal ribosomal protein uL29 family.

The sequence is that of Large ribosomal subunit protein uL29 from Ruminiclostridium cellulolyticum (strain ATCC 35319 / DSM 5812 / JCM 6584 / H10) (Clostridium cellulolyticum).